We begin with the raw amino-acid sequence, 143 residues long: Small ribosomal subunit protein uS9A (143 aa).

An N-acetylserine modification is found at Ser2. Lys30 is covalently cross-linked (Glycyl lysine isopeptide (Lys-Gly) (interchain with G-Cter in ubiquitin)). Position 34 is a phosphoserine (Ser34). Glycyl lysine isopeptide (Lys-Gly) (interchain with G-Cter in ubiquitin) cross-links involve residues Lys47 and Lys59. The residue at position 61 (Ser61) is a Phosphoserine. Thr70 bears the Phosphothreonine mark. The residue at position 76 (Ser76) is a Phosphoserine. Residues 123–143 (RPEPKKFGGKGARSRFQKSYR) are disordered. Residues 134 to 143 (ARSRFQKSYR) show a composition bias toward basic residues.

It belongs to the universal ribosomal protein uS9 family. Component of the small ribosomal subunit (SSU). Mature yeast ribosomes consist of a small (40S) and a large (60S) subunit. The 40S small subunit contains 1 molecule of ribosomal RNA (18S rRNA) and 33 different proteins (encoded by 57 genes). The large 60S subunit contains 3 rRNA molecules (25S, 5.8S and 5S rRNA) and 46 different proteins (encoded by 81 genes).

It localises to the cytoplasm. In terms of biological role, component of the ribosome, a large ribonucleoprotein complex responsible for the synthesis of proteins in the cell. The small ribosomal subunit (SSU) binds messenger RNAs (mRNAs) and translates the encoded message by selecting cognate aminoacyl-transfer RNA (tRNA) molecules. The large subunit (LSU) contains the ribosomal catalytic site termed the peptidyl transferase center (PTC), which catalyzes the formation of peptide bonds, thereby polymerizing the amino acids delivered by tRNAs into a polypeptide chain. The nascent polypeptides leave the ribosome through a tunnel in the LSU and interact with protein factors that function in enzymatic processing, targeting, and the membrane insertion of nascent chains at the exit of the ribosomal tunnel. This Saccharomyces cerevisiae (strain ATCC 204508 / S288c) (Baker's yeast) protein is Small ribosomal subunit protein uS9A.